The primary structure comprises 164 residues: Nitric oxide synthase, inducible (164 aa).

Phenylalanine 3 is a binding site for (6R)-L-erythro-5,6,7,8-tetrahydrobiopterin. A heme b-binding site is contributed by tyrosine 18. The interval phenylalanine 42–lysine 62 is calmodulin-binding. The Flavodoxin-like domain occupies cysteine 66–phenylalanine 164. Threonine 72, glutamate 73, threonine 74, lysine 76, serine 77, serine 118, threonine 119, serine 155, and cysteine 162 together coordinate FMN.

This sequence belongs to the NOS family. As to quaternary structure, homodimer. Heme b serves as cofactor. The cofactor is FAD. Requires FMN as cofactor. (6R)-L-erythro-5,6,7,8-tetrahydrobiopterin is required as a cofactor.

The protein resides in the cytoplasm. It is found in the cytosol. It catalyses the reaction 2 L-arginine + 3 NADPH + 4 O2 + H(+) = 2 L-citrulline + 2 nitric oxide + 3 NADP(+) + 4 H2O. Its activity is regulated as follows. Not stimulated by calcium/calmodulin. Produces nitric oxide (NO) which is a messenger molecule with diverse functions throughout the body. In macrophages, NO mediates tumoricidal and bactericidal actions. Also has nitrosylase activity and mediates cysteine S-nitrosylation of cytoplasmic target proteins such COX2. The protein is Nitric oxide synthase, inducible (nos2) of Carassius auratus (Goldfish).